The primary structure comprises 159 residues: Cytochrome c-type biogenesis protein CcmE (159 aa).

Residues 1–8 (MNLRRKNR) are Cytoplasmic-facing. Residues 9–29 (LWVVCAVLAGLGLTTALVLYA) form a helical; Signal-anchor for type II membrane protein membrane-spanning segment. The Periplasmic segment spans residues 30-159 (LRANIDLFYT…PQRADKDTSS (130 aa)). Positions 129-159 (KHDENYTPPEVEKAMQENHRRPQRADKDTSS) are disordered. His130 and Tyr134 together coordinate heme.

It belongs to the CcmE/CycJ family.

The protein localises to the cell inner membrane. In terms of biological role, heme chaperone required for the biogenesis of c-type cytochromes. Transiently binds heme delivered by CcmC and transfers the heme to apo-cytochromes in a process facilitated by CcmF and CcmH. The protein is Cytochrome c-type biogenesis protein CcmE of Salmonella typhimurium (strain LT2 / SGSC1412 / ATCC 700720).